We begin with the raw amino-acid sequence, 148 residues long: Small ribosomal subunit protein uS13 (148 aa).

It belongs to the universal ribosomal protein uS13 family. Part of the 30S ribosomal subunit. Forms a loose heterodimer with protein S19. Forms two bridges to the 50S subunit in the 70S ribosome.

Its function is as follows. Located at the top of the head of the 30S subunit, it contacts several helices of the 16S rRNA. In the 70S ribosome it contacts the 23S rRNA (bridge B1a) and protein L5 of the 50S subunit (bridge B1b), connecting the 2 subunits; these bridges are implicated in subunit movement. The protein is Small ribosomal subunit protein uS13 of Pyrococcus horikoshii (strain ATCC 700860 / DSM 12428 / JCM 9974 / NBRC 100139 / OT-3).